A 247-amino-acid chain; its full sequence is 3,4-dihydroxy-2-butanone 4-phosphate synthase (247 aa).

D-ribulose 5-phosphate contacts are provided by residues 38-39 (RE), Asp43, 179-183 (RMGQT), and Glu203. Glu39 contacts Mg(2+).

The protein belongs to the DHBP synthase family. As to quaternary structure, homodimer. Mg(2+) is required as a cofactor. It depends on Mn(2+) as a cofactor.

The enzyme catalyses D-ribulose 5-phosphate = (2S)-2-hydroxy-3-oxobutyl phosphate + formate + H(+). It functions in the pathway cofactor biosynthesis; riboflavin biosynthesis; 2-hydroxy-3-oxobutyl phosphate from D-ribulose 5-phosphate: step 1/1. In terms of biological role, catalyzes the conversion of D-ribulose 5-phosphate to formate and 3,4-dihydroxy-2-butanone 4-phosphate. This chain is 3,4-dihydroxy-2-butanone 4-phosphate synthase, found in Methanosarcina mazei (strain ATCC BAA-159 / DSM 3647 / Goe1 / Go1 / JCM 11833 / OCM 88) (Methanosarcina frisia).